A 103-amino-acid chain; its full sequence is Small ribosomal subunit protein uS10 (103 aa).

The protein belongs to the universal ribosomal protein uS10 family. Part of the 30S ribosomal subunit.

In terms of biological role, involved in the binding of tRNA to the ribosomes. This Alkalilimnicola ehrlichii (strain ATCC BAA-1101 / DSM 17681 / MLHE-1) protein is Small ribosomal subunit protein uS10.